A 268-amino-acid polypeptide reads, in one-letter code: MLGITVFTTFLAYASSCGAPIFQPNLSARVVGGEDAIPHSWPWQISLQYLRDNTWRHTCGGTLITPNHVLTAAHCISNTLTYRVALGKNNLEVEDEAGSLYVGVDTIFVHEKWNSFLVRNDIALIKLAETVELSDTIQVACLPEEGSLLPQDYPCFVTGWGRLYTNGPIAAELQQGLQPVVDYATCSQRDWWGTTVKETMVCAGGDGVISACNGDSGGPLNCQAENGNWDVRGIVSFGSGLSCNTFKKPTVFTRVSAYIDWINQKLQL.

A signal peptide spans 1 to 16 (MLGITVFTTFLAYASS). Residues 17 to 29 (CGAPIFQPNLSAR) constitute a propeptide, activation peptide. Cystine bridges form between Cys17–Cys141, Cys59–Cys75, Cys155–Cys222, Cys186–Cys202, and Cys212–Cys243. Residue Asn25 is glycosylated (N-linked (GlcNAc...) asparagine). In terms of domain architecture, Peptidase S1 spans 30–268 (VVGGEDAIPH…IDWINQKLQL (239 aa)). Residues His74 and Asp121 each act as charge relay system in the active site. Ser216 acts as the Charge relay system in catalysis.

It belongs to the peptidase S1 family. Elastase subfamily. In terms of assembly, monomer. The zymogen is secreted as a ternary complex composed of procarboxypeptidase A, chymotrypsinogen C and proproteinase E. Pancreas.

It localises to the secreted. It is found in the extracellular space. The enzyme catalyses Preferential cleavage: Leu-|-Xaa, Tyr-|-Xaa, Phe-|-Xaa, Met-|-Xaa, Trp-|-Xaa, Gln-|-Xaa, Asn-|-Xaa.. Regulates activation and degradation of trypsinogens and procarboxypeptidases by targeting specific cleavage sites within their zymogen precursors. Has chymotrypsin-type protease activity and hypocalcemic activity. The chain is Chymotrypsin-C (CTRC) from Bos taurus (Bovine).